Reading from the N-terminus, the 266-residue chain is PTS system mannose-specific EIIC component (266 aa).

At methionine 1 the chain carries N-formylmethionine. Residues 1–4 (MEIT) are Periplasmic-facing. Residues 1–237 (MEITTLQIVL…GVIGTVMAVL (237 aa)) enclose the PTS EIIC type-4 domain. Residues 5 to 43 (TLQIVLVFIVACIAGMGSILDEFQFHRPLIACTLVGIVL) lie within the membrane without spanning it. The Periplasmic portion of the chain corresponds to 44–46 (GDM). Residues 47 to 86 (KTGIIIGGTLEMIALGWMNIGAAVAPDAALASIISTILVI) lie within the membrane without spanning it. Residues 87–90 (AGHQ) are Periplasmic-facing. The chain crosses the lipid bilayer at residues 91–124 (SIGAGIALAIPLAAAGQVLTIIVRTITVAFQHAA). Over 125–132 (DKAADNGN) the chain is Cytoplasmic. The segment at 133 to 160 (LTAISWIHVSSLFLQAMRVAIPAVIVAL) is a transmembrane helix. Topologically, residues 161 to 176 (SVGTSEVQNMLNAIPE) are periplasmic. Over 177 to 200 (VVTNGLNIAGGMIVVVGYAMVINM) the chain traverses the membrane. At 201 to 207 (MRAGYLM) the chain is on the cytoplasmic side. The chain crosses the lipid bilayer at residues 208 to 218 (PFFYLGFVTAA). The Periplasmic portion of the chain corresponds to 219–224 (FTNFNL). Over 225–242 (VALGVIGTVMAVLYIQLS) the chain traverses the membrane. At 243–266 (PKYNRVAGAPAQAAGNNDLDNELD) the chain is on the cytoplasmic side.

In terms of assembly, homotrimer of protomers that are composed of two subunits, IIC and IID.

The protein localises to the cell inner membrane. Its function is as follows. The phosphoenolpyruvate-dependent sugar phosphotransferase system (sugar PTS), a major carbohydrate active transport system, catalyzes the phosphorylation of incoming sugar substrates concomitantly with their translocation across the cell membrane. The enzyme II ManXYZ PTS system is involved in mannose transport. In Escherichia coli O157:H7, this protein is PTS system mannose-specific EIIC component (manY).